A 46-amino-acid polypeptide reads, in one-letter code: Thymosin beta-a (46 aa).

A compositionally biased stretch (polar residues) spans Thr-21 to Pro-30. Positions Thr-21 to Lys-46 are disordered. Positions Thr-31 to Lys-46 are enriched in basic and acidic residues.

The protein belongs to the thymosin beta family.

The protein localises to the cytoplasm. It is found in the cytoskeleton. Plays an important role in the organization of the cytoskeleton. Binds to and sequesters actin monomers (G actin) and therefore inhibits actin polymerization. In Cyprinus carpio (Common carp), this protein is Thymosin beta-a.